We begin with the raw amino-acid sequence, 370 residues long: Forkhead box protein J1.2 (370 aa).

Positions 45–74 are disordered; that stretch reads ANSRPPVPRVSQGPCSPPAGDTASCQAPRT. Positions 108–202 form a DNA-binding region, fork-head; the sequence is KPPYSYATLI…VNGVLKRRRM (95 aa). Residues 227 to 246 are disordered; that stretch reads PGSHHMQHISGGHRQSRRYE.

This sequence belongs to the FOXJ1 family.

It is found in the nucleus. Functionally, key transcription factor required for motile ciliogenesis. Activates genes essential for motile cilia formation and function. In Xenopus laevis (African clawed frog), this protein is Forkhead box protein J1.2.